A 179-amino-acid chain; its full sequence is ATP synthase subunit delta (179 aa).

It belongs to the ATPase delta chain family. In terms of assembly, F-type ATPases have 2 components, F(1) - the catalytic core - and F(0) - the membrane proton channel. F(1) has five subunits: alpha(3), beta(3), gamma(1), delta(1), epsilon(1). F(0) has three main subunits: a(1), b(2) and c(10-14). The alpha and beta chains form an alternating ring which encloses part of the gamma chain. F(1) is attached to F(0) by a central stalk formed by the gamma and epsilon chains, while a peripheral stalk is formed by the delta and b chains.

It is found in the cell inner membrane. F(1)F(0) ATP synthase produces ATP from ADP in the presence of a proton or sodium gradient. F-type ATPases consist of two structural domains, F(1) containing the extramembraneous catalytic core and F(0) containing the membrane proton channel, linked together by a central stalk and a peripheral stalk. During catalysis, ATP synthesis in the catalytic domain of F(1) is coupled via a rotary mechanism of the central stalk subunits to proton translocation. Functionally, this protein is part of the stalk that links CF(0) to CF(1). It either transmits conformational changes from CF(0) to CF(1) or is implicated in proton conduction. The chain is ATP synthase subunit delta from Bordetella avium (strain 197N).